The following is a 193-amino-acid chain: Ribosome maturation factor RimM (193 aa).

Residues 97 to 172 (DDEFYLTDLV…LILADPPALV (76 aa)) enclose the PRC barrel domain. Residues 168–193 (PPALVGDHEGPEEKGLDENEELGDRD) form a disordered region. The span at 173–193 (GDHEGPEEKGLDENEELGDRD) shows a compositional bias: basic and acidic residues.

This sequence belongs to the RimM family. In terms of assembly, binds ribosomal protein uS19.

The protein localises to the cytoplasm. Its function is as follows. An accessory protein needed during the final step in the assembly of 30S ribosomal subunit, possibly for assembly of the head region. Essential for efficient processing of 16S rRNA. May be needed both before and after RbfA during the maturation of 16S rRNA. It has affinity for free ribosomal 30S subunits but not for 70S ribosomes. The protein is Ribosome maturation factor RimM of Caulobacter vibrioides (strain ATCC 19089 / CIP 103742 / CB 15) (Caulobacter crescentus).